Reading from the N-terminus, the 136-residue chain is Histone H3.3C (136 aa).

Polar residues predominate over residues M1–K10. A disordered region spans residues M1–P39. R3 bears the Asymmetric dimethylarginine; by PRMT6 mark. A Phosphothreonine; by HASPIN modification is found at T4. An Allysine; alternate modification is found at K5. K5 is subject to N6,N6,N6-trimethyllysine; alternate. Position 5 is an N6,N6-dimethyllysine; alternate (K5). K5 is subject to N6-(2-hydroxyisobutyryl)lysine; alternate. K5 carries the N6-acetyllysine; alternate modification. K5 is modified (N6-methyllysine; alternate). Q6 is modified (5-glutamyl dopamine; alternate). Q6 is modified (5-glutamyl serotonin; alternate). T7 carries the post-translational modification Phosphothreonine; by PKC. K10 carries the N6-(2-hydroxyisobutyryl)lysine; alternate modification. Residue K10 is modified to N6-lactoyllysine; alternate. Position 10 is an N6-methylated lysine (K10). At S11 the chain carries ADP-ribosylserine; alternate. Position 11 is a phosphoserine; alternate; by AURKB, AURKC, RPS6KA3, RPS6KA4 and RPS6KA5 (S11). T12 carries the post-translational modification Phosphothreonine; by PKC. K15 bears the N6-(2-hydroxyisobutyryl)lysine; alternate mark. Position 15 is an N6-lactoyllysine; alternate (K15). K15 bears the N6-acetyllysine mark. Residue K15 is modified to N6-glutaryllysine; alternate. R18 is modified (asymmetric dimethylarginine). N6-(2-hydroxyisobutyryl)lysine; alternate occurs at positions 19, 24, and 28. Residue K19 is modified to N6-acetyllysine; alternate. Residues K19, K24, and K28 each carry the N6-lactoyllysine; alternate modification. N6-glutaryllysine; alternate is present on residues K19, K24, and K28. N6-butyryllysine; alternate is present on residues K19 and K24. N6-methylated lysine; alternate is present on K19. N6-acetyllysine is present on K24. K28 is modified (N6-acetyllysine; alternate). K28 is subject to N6-methylated lysine; alternate. The residue at position 29 (S29) is an ADP-ribosylserine; alternate. S29 carries the phosphoserine; alternate; by AURKB, AURKC and RPS6KA5 modification. K37 bears the N6-(2-hydroxyisobutyryl)lysine; alternate mark. K37 carries the N6-acetyllysine; alternate modification. N6-methylated lysine; alternate is present on K37. The residue at position 42 (Y42) is a Phosphotyrosine. K57 carries the post-translational modification N6-(2-hydroxyisobutyryl)lysine; alternate. N6-lactoyllysine; alternate is present on K57. K57 carries the N6-glutaryllysine; alternate modification. Residue K57 is modified to N6-succinyllysine; alternate. S58 carries the post-translational modification Phosphoserine. 2 positions are modified to N6-(2-hydroxyisobutyryl)lysine; alternate: K65 and K80. K65 and K80 each carry N6-methylated lysine. Position 80 is an N6-lactoyllysine; alternate (K80). N6-glutaryllysine; alternate is present on K80. Position 80 is an N6-succinyllysine; alternate (K80). At T81 the chain carries Phosphothreonine. Residues K116 and K123 each carry the N6-acetyllysine; alternate modification. N6-glutaryllysine; alternate occurs at positions 116 and 123. K123 bears the N6-(2-hydroxyisobutyryl)lysine; alternate mark. The residue at position 123 (K123) is an N6-methylated lysine; alternate. At K123 the chain carries N6-succinyllysine; alternate.

Belongs to the histone H3 family. The nucleosome is a histone octamer containing two molecules each of H2A, H2B, H3 and H4 assembled in one H3-H4 heterotetramer and two H2A-H2B heterodimers. The octamer wraps approximately 147 bp of DNA. Acetylation is generally linked to gene activation. Acetylation on Lys-19 (H3K18ac) and Lys-24 (H3K24ac) favors methylation at Arg-18 (H3R17me). Acetylation at Lys-123 (H3K122ac) by EP300/p300 plays a central role in chromatin structure: localizes at the surface of the histone octamer and stimulates transcription, possibly by promoting nucleosome instability. In terms of processing, asymmetric dimethylation at Arg-18 (H3R17me2a) is linked to gene activation. Asymmetric dimethylation at Arg-3 (H3R2me2a) by PRMT6 is linked to gene repression and is mutually exclusive with H3 Lys-5 methylation (H3K4me2 and H3K4me3). H3R2me2a is present at the 3' of genes regardless of their transcription state and is enriched on inactive promoters, while it is absent on active promoters. Post-translationally, methylation at Lys-5 (H3K4me) and Lys-80 (H3K79me) are linked to gene activation. Methylation at Lys-5 (H3K4me) facilitates subsequent acetylation of H3 and H4. Methylation at Lys-80 (H3K79me) is associated with DNA double-strand break (DSB) responses and is a specific target for TP53BP1. Methylation at Lys-10 (H3K9me) and Lys-28 (H3K27me) are linked to gene repression. Methylation at Lys-10 (H3K9me) is a specific target for HP1 proteins (CBX1, CBX3 and CBX5) and prevents subsequent phosphorylation at Ser-11 (H3S10ph) and acetylation of H3 and H4. Methylation at Lys-5 (H3K4me) and Lys-80 (H3K79me) require preliminary monoubiquitination of H2B at 'Lys-120'. Phosphorylated at Thr-4 (H3T3ph) by HASPIN during prophase and dephosphorylated during anaphase. Phosphorylation at Ser-11 (H3S10ph) by AURKB is crucial for chromosome condensation and cell-cycle progression during mitosis and meiosis. In addition phosphorylation at Ser-11 (H3S10ph) by RPS6KA4 and RPS6KA5 is important during interphase because it enables the transcription of genes following external stimulation, like mitogens, stress, growth factors or UV irradiation and result in the activation of genes, such as c-fos and c-jun. Phosphorylation at Ser-11 (H3S10ph), which is linked to gene activation, prevents methylation at Lys-10 (H3K9me) but facilitates acetylation of H3 and H4. Phosphorylation at Ser-11 (H3S10ph) by AURKB mediates the dissociation of HP1 proteins (CBX1, CBX3 and CBX5) from heterochromatin. Phosphorylation at Ser-11 (H3S10ph) is also an essential regulatory mechanism for neoplastic cell transformation. Phosphorylated at Ser-29 (H3S28ph) by MAP3K20 isoform 1, RPS6KA5 or AURKB during mitosis or upon ultraviolet B irradiation. Phosphorylation at Thr-7 (H3T6ph) by PRKCB is a specific tag for epigenetic transcriptional activation that prevents demethylation of Lys-5 (H3K4me) by LSD1/KDM1A. At centromeres, specifically phosphorylated at Thr-12 (H3T11ph) from prophase to early anaphase, by DAPK3 and PKN1. Phosphorylation at Thr-12 (H3T11ph) by PKN1 or isoform M2 of PKM (PKM2) is a specific tag for epigenetic transcriptional activation that promotes demethylation of Lys-10 (H3K9me) by KDM4C/JMJD2C. Phosphorylation at Tyr-42 (H3Y41ph) by JAK2 promotes exclusion of CBX5 (HP1 alpha) from chromatin. In terms of processing, lysine deamination at Lys-5 (H3K4all) to form allysine only takes place on H3K4me3 and results in gene repression. Post-translationally, butyrylation of histones marks active promoters and competes with histone acetylation. It is present during late spermatogenesis. Succinylation at Lys-80 (H3K79succ) by KAT2A takes place with a maximum frequency around the transcription start sites of genes. It gives a specific tag for epigenetic transcription activation. Desuccinylation at Lys-123 (H3K122succ) by SIRT7 in response to DNA damage promotes chromatin condensation and double-strand breaks (DSBs) repair. In terms of processing, serine ADP-ribosylation constitutes the primary form of ADP-ribosylation of proteins in response to DNA damage. Serine ADP-ribosylation at Ser-11 (H3S10ADPr) is mutually exclusive with phosphorylation at Ser-11 (H3S10ph) and impairs acetylation at Lys-10 (H3K9ac).

The protein localises to the nucleus. The protein resides in the chromosome. Functionally, core component of nucleosome. Nucleosomes wrap and compact DNA into chromatin, limiting DNA accessibility to the cellular machineries which require DNA as a template. Histones thereby play a central role in transcription regulation, DNA repair, DNA replication and chromosomal stability. DNA accessibility is regulated via a complex set of post-translational modifications of histones, also called histone code, and nucleosome remodeling. The chain is Histone H3.3C from Cairina moschata (Muscovy duck).